We begin with the raw amino-acid sequence, 219 residues long: Ribose-5-phosphate isomerase A (219 aa).

Residues 28–31 (TGST), 81–84 (DGAD), and 94–97 (KGGG) each bind substrate. Glu103 serves as the catalytic Proton acceptor. Lys121 lines the substrate pocket.

The protein belongs to the ribose 5-phosphate isomerase family. Homodimer.

The enzyme catalyses aldehydo-D-ribose 5-phosphate = D-ribulose 5-phosphate. Its pathway is carbohydrate degradation; pentose phosphate pathway; D-ribose 5-phosphate from D-ribulose 5-phosphate (non-oxidative stage): step 1/1. In terms of biological role, catalyzes the reversible conversion of ribose-5-phosphate to ribulose 5-phosphate. This is Ribose-5-phosphate isomerase A from Salmonella arizonae (strain ATCC BAA-731 / CDC346-86 / RSK2980).